A 409-amino-acid polypeptide reads, in one-letter code: Rho-GTPase-activating protein BAG7 (409 aa).

Over residues 1–26 the composition is skewed to polar residues; it reads MFNMNLLSTPSSEEGSPQNRSSSMSS. The segment at 1–32 is disordered; that stretch reads MFNMNLLSTPSSEEGSPQNRSSSMSSVEGKKD. The 208-residue stretch at 50–257 folds into the Rho-GAP domain; it reads VSLEESLKVA…FLILHASDII (208 aa). The segment at 362–409 is disordered; sequence KLLGNVGNSSNTGIKDPTERVPRGEHKTKHKQRQSWLRRLTSPSRTQP. A compositionally biased stretch (basic and acidic residues) spans 377-386; it reads DPTERVPRGE.

In terms of assembly, interacts with RHO1.

Acts in signal transduction. Activates RHO1. This chain is Rho-GTPase-activating protein BAG7 (BAG7), found in Saccharomyces cerevisiae (strain ATCC 204508 / S288c) (Baker's yeast).